The sequence spans 281 residues: Undecaprenyl-diphosphatase (281 aa).

Transmembrane regions (helical) follow at residues 4–24 (ILLL…FLPI), 46–63 (AFEV…CWEF), 83–103 (FVLN…LFGK), 108–128 (VLFS…IIFW), 187–207 (AVAT…ATAY), 222–242 (EFTL…FVCV), and 257–277 (FAWY…TGLI).

Belongs to the UppP family.

It localises to the cell inner membrane. It carries out the reaction di-trans,octa-cis-undecaprenyl diphosphate + H2O = di-trans,octa-cis-undecaprenyl phosphate + phosphate + H(+). Its function is as follows. Catalyzes the dephosphorylation of undecaprenyl diphosphate (UPP). Confers resistance to bacitracin. The polypeptide is Undecaprenyl-diphosphatase (Polynucleobacter necessarius subsp. necessarius (strain STIR1)).